The chain runs to 580 residues: tRNA-guanine(15) transglycosylase (580 aa).

Aspartate 91 (nucleophile) is an active-site residue. Residues aspartate 126 and alanine 192 each contribute to the substrate site. Cysteine 275, cysteine 277, and cysteine 280 together coordinate Zn(2+). The region spanning 504–579 (RMRVVVDEDA…LAVKVRRGVE (76 aa)) is the PUA domain.

This sequence belongs to the archaeosine tRNA-ribosyltransferase family. The cofactor is Zn(2+).

The catalysed reaction is guanosine(15) in tRNA + 7-cyano-7-deazaguanine = 7-cyano-7-carbaguanosine(15) in tRNA + guanine. It functions in the pathway tRNA modification; archaeosine-tRNA biosynthesis. Exchanges the guanine residue with 7-cyano-7-deazaguanine (preQ0) at position 15 in the dihydrouridine loop (D-loop) of archaeal tRNAs. The chain is tRNA-guanine(15) transglycosylase from Thermococcus kodakarensis (strain ATCC BAA-918 / JCM 12380 / KOD1) (Pyrococcus kodakaraensis (strain KOD1)).